A 246-amino-acid polypeptide reads, in one-letter code: MADS-box protein EJ2 (246 aa).

One can recognise an MADS-box domain in the interval 1-61; it reads MGRGRVELKR…GKLYEFCSTS (61 aa). One can recognise a K-box domain in the interval 87 to 177; it reads TQNNYHEYLR…RRKLEESVAG (91 aa).

Its subcellular location is the nucleus. Functionally, MADS-box transcription factor that acts redundantly with J2 to control meristem maturation and inflorescence architecture. The protein is MADS-box protein EJ2 of Solanum lycopersicum (Tomato).